The chain runs to 347 residues: NADH-ubiquinone oxidoreductase chain 2 (347 aa).

A run of 10 helical transmembrane segments spans residues 3–23 (PPILIIIMATIMTGTMIVMLS), 25–45 (HWLLIWIGFEMNMLAIIPILM), 66–86 (ASMLLMMGVTINLLYSGQWVI), 111–131 (FHFWVPEVTQGITLMSGMILL), 149–169 (INTNLLMLMALTSVLVGGWGG), 178–198 (IMAYSSIAHMGWMAAIITYNP), 201–221 (MVLNLTLYILMTLSTFMLFML), 237–257 (FPLITSMILILMLSLGGLPPL), 274–294 (NMIIIPTLMAITALLNLYFYL), and 325–345 (LLPPLIITSTMLLPLTPMLSV).

The protein belongs to the complex I subunit 2 family. In terms of assembly, core subunit of respiratory chain NADH dehydrogenase (Complex I) which is composed of 45 different subunits. Interacts with TMEM242.

It is found in the mitochondrion inner membrane. The enzyme catalyses a ubiquinone + NADH + 5 H(+)(in) = a ubiquinol + NAD(+) + 4 H(+)(out). Functionally, core subunit of the mitochondrial membrane respiratory chain NADH dehydrogenase (Complex I) which catalyzes electron transfer from NADH through the respiratory chain, using ubiquinone as an electron acceptor. Essential for the catalytic activity and assembly of complex I. In Canis lupus familiaris (Dog), this protein is NADH-ubiquinone oxidoreductase chain 2.